The following is a 49-amino-acid chain: Venom peptide 3 (49 aa).

A signal peptide spans 1 to 23; it reads MRFTFVLVIAATVAVLGFFGINA. AXPX repeat units lie at residues 23 to 26 and 31 to 34; these read AEPM and AEPY. The propeptide occupies 24 to 37; it reads EPMPDPHAEPYPDA. Leucine amide is present on leucine 48.

In terms of tissue distribution, expressed by the venom gland.

It localises to the secreted. This Eumenes pomiformis (Potter wasp) protein is Venom peptide 3.